The chain runs to 188 residues: Elongation factor P-like protein (188 aa).

It belongs to the elongation factor P family.

In Vibrio parahaemolyticus serotype O3:K6 (strain RIMD 2210633), this protein is Elongation factor P-like protein.